Here is a 117-residue protein sequence, read N- to C-terminus: V-type proton ATPase subunit G (117 aa).

This sequence belongs to the V-ATPase G subunit family. In terms of assembly, V-ATPase is a heteromultimeric enzyme made up of two complexes: the ATP-hydrolytic V1 complex and the proton translocation V0 complex. The V1 complex consists of three catalytic AB heterodimers that form a heterohexamer, three peripheral stalks each consisting of EG heterodimers, one central rotor including subunits D and F, and the regulatory subunits C and H. The proton translocation complex V0 consists of the proton transport subunit a, a ring of proteolipid subunits c9c'', rotary subunit d, subunits e and f, and the accessory subunits VhaAC45 and ATP6AP2.

Subunit of the V1 complex of vacuolar(H+)-ATPase (V-ATPase), a multisubunit enzyme composed of a peripheral complex (V1) that hydrolyzes ATP and a membrane integral complex (V0) that translocates protons. V-ATPase is responsible for acidifying and maintaining the pH of intracellular compartments and in some cell types, is targeted to the plasma membrane, where it is responsible for acidifying the extracellular environment. In enterocytes, acts as part of a pHCl-2 sensory pathway which mediates Tor-dependent larval growth and metabolism in response to zinc availability. Likely acts in maintaining enterocyte lysosomal acidification which consequently promotes Tor activation at the lysosome membrane. In Drosophila melanogaster (Fruit fly), this protein is V-type proton ATPase subunit G (Vha13).